The chain runs to 261 residues: 14-3-3 protein 9 (261 aa).

The segment at 239–261 (PEDAEDAQKGDATNKAGGGEDAE) is disordered.

Belongs to the 14-3-3 family. As to quaternary structure, homodimer.

The chain is 14-3-3 protein 9 (TFT9) from Solanum lycopersicum (Tomato).